The sequence spans 551 residues: Adenine deaminase (551 aa).

Belongs to the metallo-dependent hydrolases superfamily. Adenine deaminase family. Requires Mn(2+) as cofactor.

It carries out the reaction adenine + H2O + H(+) = hypoxanthine + NH4(+). The polypeptide is Adenine deaminase (Leuconostoc citreum (strain KM20)).